Reading from the N-terminus, the 158-residue chain is MKRNSNRKPNEICINRKAKYSFSIKETFEAGIVLLGWEVKSVRCGKINISNSYISLKNGEMYLVNSQFDPISKSNLYITYECNRIKKILLRKREITYLYSKLYKSHLTIIVLSIFFKKQWCKVKIGIAKGKTIKDKREHKKLSEWKKTQNRFVKRIRH.

Belongs to the SmpB family.

The protein localises to the cytoplasm. Functionally, required for rescue of stalled ribosomes mediated by trans-translation. Binds to transfer-messenger RNA (tmRNA), required for stable association of tmRNA with ribosomes. tmRNA and SmpB together mimic tRNA shape, replacing the anticodon stem-loop with SmpB. tmRNA is encoded by the ssrA gene; the 2 termini fold to resemble tRNA(Ala) and it encodes a 'tag peptide', a short internal open reading frame. During trans-translation Ala-aminoacylated tmRNA acts like a tRNA, entering the A-site of stalled ribosomes, displacing the stalled mRNA. The ribosome then switches to translate the ORF on the tmRNA; the nascent peptide is terminated with the 'tag peptide' encoded by the tmRNA and targeted for degradation. The ribosome is freed to recommence translation, which seems to be the essential function of trans-translation. The protein is SsrA-binding protein of Buchnera aphidicola subsp. Baizongia pistaciae (strain Bp).